A 242-amino-acid polypeptide reads, in one-letter code: Small ribosomal subunit protein uS3 (242 aa).

The 72-residue stretch at 39-110 (IRRFIHKKYG…QVRINVVEVE (72 aa)) folds into the KH type-2 domain. Positions 216–242 (QSMPVGASPRRRGNRRPQQFEDRSNEG) are disordered. Over residues 233–242 (QQFEDRSNEG) the composition is skewed to basic and acidic residues.

It belongs to the universal ribosomal protein uS3 family. In terms of assembly, part of the 30S ribosomal subunit. Forms a tight complex with proteins S10 and S14.

Binds the lower part of the 30S subunit head. Binds mRNA in the 70S ribosome, positioning it for translation. The polypeptide is Small ribosomal subunit protein uS3 (Prochlorococcus marinus (strain MIT 9303)).